The chain runs to 622 residues: Elongation factor 4 (622 aa).

The region spanning 17 to 201 is the tr-type G domain; that stretch reads ALIRNFCIIA…KVVAEVPAPV (185 aa). GTP contacts are provided by residues 29-34 and 148-151; these read DHGKST and NKID.

It belongs to the TRAFAC class translation factor GTPase superfamily. Classic translation factor GTPase family. LepA subfamily.

It localises to the cell membrane. It catalyses the reaction GTP + H2O = GDP + phosphate + H(+). Its function is as follows. Required for accurate and efficient protein synthesis under certain stress conditions. May act as a fidelity factor of the translation reaction, by catalyzing a one-codon backward translocation of tRNAs on improperly translocated ribosomes. Back-translocation proceeds from a post-translocation (POST) complex to a pre-translocation (PRE) complex, thus giving elongation factor G a second chance to translocate the tRNAs correctly. Binds to ribosomes in a GTP-dependent manner. In Streptomyces avermitilis (strain ATCC 31267 / DSM 46492 / JCM 5070 / NBRC 14893 / NCIMB 12804 / NRRL 8165 / MA-4680), this protein is Elongation factor 4.